The chain runs to 160 residues: MKRSDKELHLSKVEGLFSKFKYFIIANFQGMVANDFFSLRKELKMANSGLMVVKNSLSRIALKKMGREELSAKFFGSIFIVYSDDIILISKILAKFMKDNKSKISLLCAYDSNEILDSEKVLYFASLPSLRELHAQIMSMISYNIPVRLALCLKALGNKE.

Belongs to the universal ribosomal protein uL10 family. As to quaternary structure, part of the ribosomal stalk of the 50S ribosomal subunit. The N-terminus interacts with L11 and the large rRNA to form the base of the stalk. The C-terminus forms an elongated spine to which L12 dimers bind in a sequential fashion forming a multimeric L10(L12)X complex.

Forms part of the ribosomal stalk, playing a central role in the interaction of the ribosome with GTP-bound translation factors. The polypeptide is Large ribosomal subunit protein uL10 (Ehrlichia canis (strain Jake)).